Consider the following 153-residue polypeptide: Prophage Rz endopeptidase RzpD (153 aa).

In terms of biological role, necessary for host cell lysis. It is believed to code for an endopeptidase that cleaves the amino-carboxyl cross-link between the diaminopimelic acid and D-alanine residues in the murein component of the bacterial cell wall. This chain is Prophage Rz endopeptidase RzpD (rzpD), found in Escherichia coli (strain K12).